The sequence spans 302 residues: 1,2-dihydroxynaphthalene dioxygenase (302 aa).

VOC domains lie at 9-124 (ELGY…IFWG) and 149-270 (GLGH…PGWR). Residue histidine 152 coordinates Fe cation. Substrate-binding positions include histidine 152, 199 to 200 (DH), histidine 215, and tyrosine 256. A Fe cation-binding site is contributed by histidine 215. Glutamate 266 serves as a coordination point for Fe cation.

It belongs to the extradiol ring-cleavage dioxygenase family. The cofactor is Fe(2+).

The enzyme catalyses naphthalene-1,2-diol + O2 = 2-hydroxychromene-2-carboxylate + H(+). The protein operates within aromatic compound metabolism; naphthalene degradation. Its activity is regulated as follows. Inhibited by bathophenanthroline sulfonate, o-phenanthroline, 8-hydroxyquinoline, 2,2'-dipyridyl and p-chlormercuribenzoate. Also inhibited by Hg(2+), Cu(2+), Co(2+) and Fe(3+) ions. Involved in the naphthalene catabolic pathway. Catalyzes the meta-cleavage of 1,2-dihydroxynaphthalene (1,2-DHN) to yield 2-hydroxychromene-2-carboxylic acid. Can also cleave 3-methylcatechol and 4-methylcatechol. This chain is 1,2-dihydroxynaphthalene dioxygenase (nahC), found in Pseudomonas putida (Arthrobacter siderocapsulatus).